Consider the following 369-residue polypeptide: Glutamate 5-kinase (369 aa).

Residue Lys-9 participates in ATP binding. The substrate site is built by Ser-49, Asp-136, and Asn-148. ATP-binding positions include 168-169 (TD) and 210-216 (TGGMLTK). The region spanning 275–355 (RGSVYVDEGA…KGVFIHRDDW (81 aa)) is the PUA domain.

It belongs to the glutamate 5-kinase family.

It is found in the cytoplasm. It carries out the reaction L-glutamate + ATP = L-glutamyl 5-phosphate + ADP. It functions in the pathway amino-acid biosynthesis; L-proline biosynthesis; L-glutamate 5-semialdehyde from L-glutamate: step 1/2. Functionally, catalyzes the transfer of a phosphate group to glutamate to form L-glutamate 5-phosphate. The sequence is that of Glutamate 5-kinase from Neisseria meningitidis serogroup B (strain ATCC BAA-335 / MC58).